We begin with the raw amino-acid sequence, 234 residues long: Sugar fermentation stimulation protein A (234 aa).

The H-T-H motif DNA-binding region spans 201–220; it reads LLSEAQQRGVEILAYKAEIS.

It belongs to the SfsA family.

Functionally, binds to DNA non-specifically. Could be a regulatory factor involved in maltose metabolism. This chain is Sugar fermentation stimulation protein A, found in Shigella sonnei (strain Ss046).